The chain runs to 121 residues: Putative RNase MJ0127 (121 aa).

Residues Arg76 and His81 contribute to the active site. An RX(4)HXY motif motif is present at residues 76-83 (RDKLIHHY). Position 83 is an O-di-AMP-tyrosine (Tyr83).

The protein belongs to the HepT RNase toxin family. As to quaternary structure, homodimer, probably forms a complex with cognate antitoxin MJ0128. Post-translationally, modified by cognate antitoxin MJ0128; probably at least 2 successive AMPylation events occur on Tyr-83.

Probable toxic component of a putative type VII toxin-antitoxin (TA) system, probably an RNase. Probably neutralized by cognate antitoxin MJ0128. Neutralization may be due to AMPylation by MJ0128. The sequence is that of Putative RNase MJ0127 from Methanocaldococcus jannaschii (strain ATCC 43067 / DSM 2661 / JAL-1 / JCM 10045 / NBRC 100440) (Methanococcus jannaschii).